The following is a 368-amino-acid chain: Anhydro-N-acetylmuramic acid kinase (368 aa).

An ATP-binding site is contributed by 13–20 (GTSLDGVD).

Belongs to the anhydro-N-acetylmuramic acid kinase family.

The enzyme catalyses 1,6-anhydro-N-acetyl-beta-muramate + ATP + H2O = N-acetyl-D-muramate 6-phosphate + ADP + H(+). The protein operates within amino-sugar metabolism; 1,6-anhydro-N-acetylmuramate degradation. It participates in cell wall biogenesis; peptidoglycan recycling. Catalyzes the specific phosphorylation of 1,6-anhydro-N-acetylmuramic acid (anhMurNAc) with the simultaneous cleavage of the 1,6-anhydro ring, generating MurNAc-6-P. Is required for the utilization of anhMurNAc either imported from the medium or derived from its own cell wall murein, and thus plays a role in cell wall recycling. The sequence is that of Anhydro-N-acetylmuramic acid kinase from Hahella chejuensis (strain KCTC 2396).